Consider the following 480-residue polypeptide: Islet cell autoantigen 1 (480 aa).

In terms of domain architecture, AH spans 50 to 253 (ASDADLDAKL…TSHTMAAIHE (204 aa)). Basic and acidic residues-rich tracts occupy residues 276-293 (LVEK…REAV) and 306-321 (ENQH…EEGK). Disordered regions lie at residues 276–338 (LVEK…ACSG) and 400–421 (LKEP…IGSA).

The protein localises to the cytoplasm. The protein resides in the cytosol. Its subcellular location is the golgi apparatus membrane. It localises to the cytoplasmic vesicle. It is found in the secretory vesicle membrane. The protein localises to the secretory vesicle. The protein resides in the synaptic vesicle membrane. Its function is as follows. May play a role in neurotransmitter secretion. The protein is Islet cell autoantigen 1 of Rattus norvegicus (Rat).